Reading from the N-terminus, the 414-residue chain is Arrestin domain-containing protein 3 (414 aa).

2 consecutive short sequence motifs (PPxY motif) follow at residues 346-349 and 391-394; these read PPSY and PPLY. The disordered stretch occupies residues 393 to 414; sequence LYSEIDPNPDQSSEDRPSCPSR. Over residues 405–414 the composition is skewed to basic and acidic residues; the sequence is SEDRPSCPSR.

This sequence belongs to the arrestin family. As to quaternary structure, interacts (via PPxY motifs) with NEDD4 (via WW domains). Interacts with ADRB2. Interacts with ADRB3. Interacts with HGS (via PPxY motifs). Does not bind TXN (thioredoxin). Interacts with ITCH. In terms of tissue distribution, detected in visceral fat, subcutaneous fat, brown fat and skeletal muscle, and at lower levels in kidney.

The protein localises to the cytoplasm. It localises to the cell membrane. Its subcellular location is the lysosome. It is found in the endosome. The protein resides in the early endosome. Functionally, adapter protein that plays a role in regulating cell-surface expression of adrenergic receptors and probably also other G protein-coupled receptors. Plays a role in NEDD4-mediated ubiquitination and endocytosis af activated ADRB2 and subsequent ADRB2 degradation. May recruit NEDD4 to ADRB2. Alternatively, may function as adapter protein that does not play a major role in recruiting NEDD4 to ADRB2, but rather plays a role in a targeting ADRB2 to endosomes. The chain is Arrestin domain-containing protein 3 (Arrdc3) from Mus musculus (Mouse).